Here is a 471-residue protein sequence, read N- to C-terminus: Protoporphyrinogen oxidase (471 aa).

FAD-binding positions include 16-21 (GGGISG), 39-40 (ES), A47, 61-64 (GPNS), V251, W408, and 446-448 (VGL).

This sequence belongs to the protoporphyrinogen/coproporphyrinogen oxidase family. Protoporphyrinogen oxidase subfamily. In terms of assembly, monomer. Homodimer. The cofactor is FAD.

Its subcellular location is the cytoplasm. The protein resides in the cell membrane. The catalysed reaction is protoporphyrinogen IX + 3 O2 = protoporphyrin IX + 3 H2O2. It functions in the pathway porphyrin-containing compound metabolism; protoporphyrin-IX biosynthesis; protoporphyrin-IX from protoporphyrinogen-IX: step 1/1. Its activity is regulated as follows. Strongly inhibited by acifluorfen. Its function is as follows. Catalyzes the 6-electron oxidation of protoporphyrinogen-IX to form protoporphyrin-IX. Does not oxidize coproporphyrinogen III. Involved in the classical protoporphyrin-dependent (PPD) heme b biosynthesis. In Myxococcus xanthus, this protein is Protoporphyrinogen oxidase.